Reading from the N-terminus, the 315-residue chain is MESEAGTNRTAVAEFMLLGLVQTEEMQSVIFVLLLFAYLVTTGGNLSILAAILVEPKLHTPMYFFLGNLSVLDVGCITVTVPAMLGRLLSHKSTISYDACLSQLFFFHLLAGMDCFLLTAMAYDRFLAICRPLTYSTHMNQRVQRMLVAVSWTCAFTNALTHTIALTTLNFCGPSVINHFYCDLPQLFQLSCSSTQLNELLLFVAAAVMAVAPLVFISVSYAHVVAAVLQIHSAEGRKKAFSTCGSHLTVVGIFYGTGVFSYMRLGSVESSDKDKGVGVFMTVINPMLNPLIYSLRNTDVQGALCQLLVVKRSLT.

Topologically, residues 1–28 (MESEAGTNRTAVAEFMLLGLVQTEEMQS) are extracellular. N-linked (GlcNAc...) asparagine glycosylation is present at N8. The helical transmembrane segment at 29 to 52 (VIFVLLLFAYLVTTGGNLSILAAI) threads the bilayer. Topologically, residues 53-60 (LVEPKLHT) are cytoplasmic. A helical membrane pass occupies residues 61–82 (PMYFFLGNLSVLDVGCITVTVP). Residues 83–103 (AMLGRLLSHKSTISYDACLSQ) are Extracellular-facing. A disulfide bond links C100 and C192. A helical membrane pass occupies residues 104–123 (LFFFHLLAGMDCFLLTAMAY). At 124-143 (DRFLAICRPLTYSTHMNQRV) the chain is on the cytoplasmic side. The chain crosses the membrane as a helical span at residues 144 to 161 (QRMLVAVSWTCAFTNALT). At 162-199 (HTIALTTLNFCGPSVINHFYCDLPQLFQLSCSSTQLNE) the chain is on the extracellular side. Residues 200 to 222 (LLLFVAAAVMAVAPLVFISVSYA) traverse the membrane as a helical segment. Residues 223 to 239 (HVVAAVLQIHSAEGRKK) are Cytoplasmic-facing. A helical transmembrane segment spans residues 240–262 (AFSTCGSHLTVVGIFYGTGVFSY). The Extracellular segment spans residues 263-275 (MRLGSVESSDKDK). A helical transmembrane segment spans residues 276–295 (GVGVFMTVINPMLNPLIYSL). The Cytoplasmic portion of the chain corresponds to 296–315 (RNTDVQGALCQLLVVKRSLT).

This sequence belongs to the G-protein coupled receptor 1 family.

The protein localises to the cell membrane. Odorant receptor. In Pan troglodytes (Chimpanzee), this protein is Olfactory receptor 3A3 (OR3A3).